Here is a 250-residue protein sequence, read N- to C-terminus: Phosphoribosylaminoimidazole-succinocarboxamide synthase (250 aa).

The protein belongs to the SAICAR synthetase family.

It carries out the reaction 5-amino-1-(5-phospho-D-ribosyl)imidazole-4-carboxylate + L-aspartate + ATP = (2S)-2-[5-amino-1-(5-phospho-beta-D-ribosyl)imidazole-4-carboxamido]succinate + ADP + phosphate + 2 H(+). It functions in the pathway purine metabolism; IMP biosynthesis via de novo pathway; 5-amino-1-(5-phospho-D-ribosyl)imidazole-4-carboxamide from 5-amino-1-(5-phospho-D-ribosyl)imidazole-4-carboxylate: step 1/2. This Parasynechococcus marenigrum (strain WH8102) protein is Phosphoribosylaminoimidazole-succinocarboxamide synthase.